Consider the following 263-residue polypeptide: MKLTISHHKCAIRKVMAEFVGVALLVIFGAGTACQVVLSTNPSSFLSINFGWAIGIATGAWVSAGISGGHINPAITIAMATYRGFPWREVPGYIFAQALGGFVGAALVYANYFHAIDIFEGGHIRTQATASLFATFALPYMTQASCFFSEFLATAVLFIVFLALNDKHNGALTNGLLPFALFILFIGLGASLGMQTGYAVNPARDFGPRLFLAMAGYGKAVFNYRRQYWIWAPIIAPILGAQAGGLLYDTSIYNGDDSPIKWR.

Topologically, residues 1-18 (MKLTISHHKCAIRKVMAE) are cytoplasmic. Residues 19–39 (FVGVALLVIFGAGTACQVVLS) form a helical membrane-spanning segment. Residues 40-45 (TNPSSF) are Extracellular-facing. The chain crosses the membrane as a helical span at residues 46–66 (LSINFGWAIGIATGAWVSAGI). Over 67 to 89 (SGGHINPAITIAMATYRGFPWRE) the chain is Cytoplasmic. The NPA 1 signature appears at 72–74 (NPA). The helical transmembrane segment at 90-110 (VPGYIFAQALGGFVGAALVYA) threads the bilayer. Over 111 to 143 (NYFHAIDIFEGGHIRTQATASLFATFALPYMTQ) the chain is Extracellular. The chain crosses the membrane as a helical span at residues 144-164 (ASCFFSEFLATAVLFIVFLAL). Topologically, residues 165–169 (NDKHN) are cytoplasmic. The helical transmembrane segment at 170-190 (GALTNGLLPFALFILFIGLGA) threads the bilayer. Over 191 to 227 (SLGMQTGYAVNPARDFGPRLFLAMAGYGKAVFNYRRQ) the chain is Extracellular. Positions 201 to 203 (NPA) match the NPA 2 motif. Residues 228–248 (YWIWAPIIAPILGAQAGGLLY) form a helical membrane-spanning segment. Residues 249 to 263 (DTSIYNGDDSPIKWR) are Cytoplasmic-facing.

This sequence belongs to the MIP/aquaporin (TC 1.A.8) family.

It is found in the membrane. The catalysed reaction is H2O(in) = H2O(out). Water channel required to facilitate the transport of water across membranes. Shows low but significant water conductivity, but no glycerol nor ammonium transport activities. The chain is Aquaporin Lacbi1:247946 from Laccaria bicolor (strain S238N-H82 / ATCC MYA-4686) (Bicoloured deceiver).